Reading from the N-terminus, the 295-residue chain is Glycine--tRNA ligase alpha subunit (295 aa).

Belongs to the class-II aminoacyl-tRNA synthetase family. As to quaternary structure, tetramer of two alpha and two beta subunits.

It is found in the cytoplasm. It catalyses the reaction tRNA(Gly) + glycine + ATP = glycyl-tRNA(Gly) + AMP + diphosphate. The chain is Glycine--tRNA ligase alpha subunit from Bacillus licheniformis (strain ATCC 14580 / DSM 13 / JCM 2505 / CCUG 7422 / NBRC 12200 / NCIMB 9375 / NCTC 10341 / NRRL NRS-1264 / Gibson 46).